We begin with the raw amino-acid sequence, 140 residues long: Large ribosomal subunit protein uL11 (140 aa).

The protein belongs to the universal ribosomal protein uL11 family. As to quaternary structure, part of the ribosomal stalk of the 50S ribosomal subunit. Interacts with L10 and the large rRNA to form the base of the stalk. L10 forms an elongated spine to which L12 dimers bind in a sequential fashion forming a multimeric L10(L12)X complex. One or more lysine residues are methylated.

Forms part of the ribosomal stalk which helps the ribosome interact with GTP-bound translation factors. This chain is Large ribosomal subunit protein uL11, found in Symbiobacterium thermophilum (strain DSM 24528 / JCM 14929 / IAM 14863 / T).